A 494-amino-acid polypeptide reads, in one-letter code: MIKFALALTLCLAGASLSLAQHNPQWWGNRNTIVHLFEWKWSDIAEECETFLAPRGFAGVQVSPVNENIISAGRPWWERYQPISYKLTTRSGNEEEFADMVRRCNDVGIRIYVDVLLNHMSGDFDGVAVGTAGTEAEPSKKSFPGVPYTAQDFHPSCEITDWNNRFQVQECELVGLKDLNQHSDYVRSKLIEFLDHLIELGVAGFRVDAAKHMAAEDLEYIYGSLSNLNIEHGFPHNARPFIFQEVIDHGHETVSREEYNQLGAVTEFRFSEEIGNAFRGNNALKWLQSWGTGWGFLSSEQAFTFVDNHDNQRDQGSVLNYKSPRQYKMATAFHLANPYGIIRVMSSFAFDDQDTPPPQDAQENIISPEFDEDGACVNGWICEHRWRQIYAMVGFKNAVRDTELSGWWDNGDNQISFCRGNKGFLAVNNNQYDLSQELNTCLPAGEYCDVISGSLIDGACTGKSVTVNEHGYGYIHIGSDDFDGVLALHVNAKV.

An N-terminal signal peptide occupies residues 1–20 (MIKFALALTLCLAGASLSLA). A Pyrrolidone carboxylic acid modification is found at Gln-21. A disulfide bond links Cys-48 and Cys-104. 3 residues coordinate Ca(2+): Asn-118, Gln-169, and Asp-178. Cysteines 157 and 171 form a disulfide. Arg-206 contacts chloride. The active-site Nucleophile is the Asp-208. Position 212 (His-212) interacts with Ca(2+). The active-site Proton donor is the Glu-245. Asn-308 and Arg-343 together coordinate chloride. 3 disulfide bridges follow: Cys-376–Cys-382, Cys-418–Cys-441, and Cys-448–Cys-460.

This sequence belongs to the glycosyl hydrolase 13 family. In terms of assembly, monomer. Ca(2+) serves as cofactor. The cofactor is chloride.

The protein localises to the secreted. The catalysed reaction is Endohydrolysis of (1-&gt;4)-alpha-D-glucosidic linkages in polysaccharides containing three or more (1-&gt;4)-alpha-linked D-glucose units.. The protein is Alpha-amylase-related protein (Amyrel) of Drosophila bocqueti (Fruit fly).